The following is a 474-amino-acid chain: Shugoshin-1 (474 aa).

4 disordered regions span residues methionine 1–alanine 53, valine 189–serine 226, asparagine 322–lysine 356, and valine 422–asparagine 442. 2 stretches are compositionally biased toward polar residues: residues glycine 12–serine 22 and glutamate 190–cysteine 201. The span at lysine 211–serine 220 shows a compositional bias: basic residues. 2 stretches are compositionally biased toward polar residues: residues asparagine 322 to aspartate 341 and valine 422 to glutamate 431.

The protein belongs to the shugoshin family. As to expression, highly expressed in tissues containing meiocytes. Expressed at much lower level in leaves and pollen-containing flowers.

The protein localises to the nucleus. It is found in the chromosome. It localises to the centromere. Functionally, plays a central role in chromosome cohesion during meiosis I by preventing premature dissociation of cohesin complex from centromeres after prophase, when most of cohesin complex dissociates from chromosomes arms. Required for maintenance of centromeric cohesion before prophase II and correct segregation of chromatids during meiosis II. Has apparently no function in mitosis. The protein is Shugoshin-1 of Zea mays (Maize).